Consider the following 720-residue polypeptide: Dedicator of cytokinesis protein 9 (720 aa).

The DOCKER domain occupies 186 to 638 (KSYASTPELR…LSDIIVPRIC (453 aa)). Residues 277–638 (DEEASMMEDV…LSDIIVPRIC (362 aa)) are interaction with CDC42.

This sequence belongs to the DOCK family. In terms of assembly, homodimer. Interacts preferentially with nucleotide-depleted CDC42.

It localises to the endomembrane system. Its function is as follows. Guanine nucleotide-exchange factor (GEF) that activates CDC42 by exchanging bound GDP for free GTP. Overexpression induces filopodia formation. The polypeptide is Dedicator of cytokinesis protein 9 (Dock9) (Rattus norvegicus (Rat)).